The chain runs to 282 residues: Phosphatidylserine decarboxylase proenzyme (282 aa).

Active-site charge relay system; for autoendoproteolytic cleavage activity residues include Asp-89, His-145, and Ser-249. Ser-249 acts as the Schiff-base intermediate with substrate; via pyruvic acid; for decarboxylase activity in catalysis. Ser-249 carries the pyruvic acid (Ser); by autocatalysis modification.

The protein belongs to the phosphatidylserine decarboxylase family. PSD-B subfamily. Prokaryotic type I sub-subfamily. In terms of assembly, heterodimer of a large membrane-associated beta subunit and a small pyruvoyl-containing alpha subunit. Requires pyruvate as cofactor. Is synthesized initially as an inactive proenzyme. Formation of the active enzyme involves a self-maturation process in which the active site pyruvoyl group is generated from an internal serine residue via an autocatalytic post-translational modification. Two non-identical subunits are generated from the proenzyme in this reaction, and the pyruvate is formed at the N-terminus of the alpha chain, which is derived from the carboxyl end of the proenzyme. The autoendoproteolytic cleavage occurs by a canonical serine protease mechanism, in which the side chain hydroxyl group of the serine supplies its oxygen atom to form the C-terminus of the beta chain, while the remainder of the serine residue undergoes an oxidative deamination to produce ammonia and the pyruvoyl prosthetic group on the alpha chain. During this reaction, the Ser that is part of the protease active site of the proenzyme becomes the pyruvoyl prosthetic group, which constitutes an essential element of the active site of the mature decarboxylase.

The protein localises to the cell membrane. The catalysed reaction is a 1,2-diacyl-sn-glycero-3-phospho-L-serine + H(+) = a 1,2-diacyl-sn-glycero-3-phosphoethanolamine + CO2. The protein operates within phospholipid metabolism; phosphatidylethanolamine biosynthesis; phosphatidylethanolamine from CDP-diacylglycerol: step 2/2. Its function is as follows. Catalyzes the formation of phosphatidylethanolamine (PtdEtn) from phosphatidylserine (PtdSer). The polypeptide is Phosphatidylserine decarboxylase proenzyme (Anaeromyxobacter sp. (strain K)).